Consider the following 363-residue polypeptide: 3-dehydroquinate synthase (363 aa).

NAD(+) is bound by residues 72–77 (SGEKEK), 130–131 (TT), Lys142, and Lys151. Zn(2+)-binding residues include Glu184, His247, and His264.

This sequence belongs to the sugar phosphate cyclases superfamily. Dehydroquinate synthase family. Requires Co(2+) as cofactor. It depends on Zn(2+) as a cofactor. NAD(+) serves as cofactor.

Its subcellular location is the cytoplasm. It catalyses the reaction 7-phospho-2-dehydro-3-deoxy-D-arabino-heptonate = 3-dehydroquinate + phosphate. Its pathway is metabolic intermediate biosynthesis; chorismate biosynthesis; chorismate from D-erythrose 4-phosphate and phosphoenolpyruvate: step 2/7. Functionally, catalyzes the conversion of 3-deoxy-D-arabino-heptulosonate 7-phosphate (DAHP) to dehydroquinate (DHQ). This Bacillus thuringiensis subsp. konkukian (strain 97-27) protein is 3-dehydroquinate synthase.